A 593-amino-acid chain; its full sequence is Tyrosine-protein phosphatase non-receptor type 11 (593 aa).

The residue at position 2 (T2) is an N-acetylthreonine. SH2 domains follow at residues 6 to 102 (WFHP…KYPL) and 112 to 216 (WFHG…KQPL). 2 positions are modified to phosphotyrosine: Y62 and Y66. The Tyrosine-protein phosphatase domain maps to 247–521 (FWEEFETLQQ…RFIYMAVQHY (275 aa)). Substrate-binding positions include D425, 459 to 465 (CSAGIGR), and Q506. C459 (phosphocysteine intermediate) is an active-site residue. Residues Y542 and Y580 each carry the phosphotyrosine; by PDGFR modification.

It belongs to the protein-tyrosine phosphatase family. Non-receptor class 2 subfamily. As to quaternary structure, interacts with CD84 and with phosphorylated SIT1 and MZPL1. Interacts with FCRL4, FCRL6 and ANKHD1. Interacts with GAREM1 (tyrosine phosphorylated); the interaction increases MAPK/ERK activity and does not affect the GRB2/SOS complex formation. Interacts with PTPNS1 and BCAR3. Interacts with phosphorylated LIME1. Interacts with SHB and INPP5D/SHIP1. Interacts with KIR2DL1; the interaction is enhanced by ARRB2. Interacts with GAB2. Interacts with TERT; the interaction retains TERT in the nucleus. Interacts with PECAM1 and FER. Interacts with EPHA2 (activated); participates in PTK2/FAK1 dephosphorylation in EPHA2 downstream signaling. Interacts with MILR1 (tyrosine phosphorylated). Interacts with FLT1 (tyrosine-phosphorylated), FLT3 (tyrosine-phosphorylated), FLT4 (tyrosine-phosphorylated), KIT and GRB2. Interacts with ROS1; mediates PTPN11 phosphorylation. Interacts with PDGFRA (tyrosine phosphorylated). Interacts with PDGFRB (tyrosine phosphorylated); this interaction increases the PTPN11 phosphatase activity. Interacts (via SH2 domain) with TEK/TIE2 (tyrosine phosphorylated). Interacts with CEACAM1 (via cytoplasmic domain); this interaction depends on the monomer/dimer equilibrium and is phosphorylation-dependent. Interacts with MPIG6B (via ITIM motif). Interacts with SIGLEC10. Interacts with Lilrb4a (when tyrosine phosphorylated). Interacts with SIGLEC10. Interacts with CLEC12B (via ITIM motif); this interaction triggers dephosphorylation and activation of PTPN11. Interacts (via SH2 domains) with NEDD9/CAS-L; the interaction is enhanced when NEDD9/CAS-L is tyrosine phosphorylated. Interacts with PIRB; when PIRB is phosphorylated by LYN at 'Tyr-794' and 'Tyr-824'. In terms of processing, phosphorylated on Tyr-542 and Tyr-580 upon receptor protein tyrosine kinase activation; which creates a binding site for GRB2 and other SH2-containing proteins. Phosphorylated upon activation of the receptor-type kinase FLT3. Phosphorylated by activated PDGFRB. Phosphorylated upon activation of the receptor-type kinase PDGFRA. In terms of tissue distribution, highly expressed in brain, heart and kidney.

It is found in the cytoplasm. The catalysed reaction is O-phospho-L-tyrosyl-[protein] + H2O = L-tyrosyl-[protein] + phosphate. In terms of biological role, acts downstream of various receptor and cytoplasmic protein tyrosine kinases to participate in the signal transduction from the cell surface to the nucleus. Positively regulates MAPK signal transduction pathway. Dephosphorylates GAB1, ARHGAP35 and EGFR. Dephosphorylates ROCK2 at 'Tyr-722' resulting in stimulation of its RhoA binding activity. Dephosphorylates CDC73. Dephosphorylates SOX9 on tyrosine residues, leading to inactivate SOX9 and promote ossification. Dephosphorylates tyrosine-phosphorylated NEDD9/CAS-L. This Mus musculus (Mouse) protein is Tyrosine-protein phosphatase non-receptor type 11 (Ptpn11).